Here is a 331-residue protein sequence, read N- to C-terminus: Adenosine deaminase (331 aa).

H12 and H14 together coordinate Zn(2+). 3 residues coordinate substrate: H14, D16, and G170. H197 contacts Zn(2+). Residue E200 is the Proton donor of the active site. Residue D278 participates in Zn(2+) binding. Residue D279 participates in substrate binding.

It belongs to the metallo-dependent hydrolases superfamily. Adenosine and AMP deaminases family. Adenosine deaminase subfamily. It depends on Zn(2+) as a cofactor.

It carries out the reaction adenosine + H2O + H(+) = inosine + NH4(+). It catalyses the reaction 2'-deoxyadenosine + H2O + H(+) = 2'-deoxyinosine + NH4(+). Its function is as follows. Catalyzes the hydrolytic deamination of adenosine and 2-deoxyadenosine. This Shewanella oneidensis (strain ATCC 700550 / JCM 31522 / CIP 106686 / LMG 19005 / NCIMB 14063 / MR-1) protein is Adenosine deaminase.